The primary structure comprises 264 residues: V-type proton ATPase subunit D (264 aa).

Over residues Arg214 to Gln230 the composition is skewed to basic and acidic residues. A disordered region spans residues Arg214 to Phe264. The span at Ala255–Phe264 shows a compositional bias: acidic residues.

This sequence belongs to the V-ATPase D subunit family. As to quaternary structure, V-ATPase is a heteromultimeric enzyme composed of a peripheral catalytic V1 complex (components A to H) attached to an integral membrane V0 proton pore complex (components: a, c, c', c'', d, e, f and VOA1).

Its subcellular location is the vacuole membrane. Its function is as follows. Subunit of the V1 complex of vacuolar(H+)-ATPase (V-ATPase), a multisubunit enzyme composed of a peripheral complex (V1) that hydrolyzes ATP and a membrane integral complex (V0) that translocates protons. V-ATPase is responsible for acidifying and maintaining the pH of intracellular compartments. The sequence is that of V-type proton ATPase subunit D (vma-8) from Neurospora crassa (strain ATCC 24698 / 74-OR23-1A / CBS 708.71 / DSM 1257 / FGSC 987).